Reading from the N-terminus, the 244-residue chain is Complement C1q subcomponent subunit A (244 aa).

A signal peptide spans 1 to 22 (MEAPRGWLVISVLAISLASSVT). Positions 28 to 94 (APDGTHGSAG…PGPSGPMGPA (67 aa)) are disordered. Positions 31–109 (GTHGSAGIPG…KGTKGSPGNI (79 aa)) constitute a Collagen-like domain. 2 positions are modified to 4-hydroxyproline: Pro-39 and Pro-45. Lys-48 is modified (5-hydroxylysine). Lys-48 carries O-linked (Gal...) hydroxylysine glycosylation. 4-hydroxyproline is present on residues Pro-54 and Pro-57. The residue at position 67 (Lys-67) is a 5-hydroxylysine. Residue Lys-67 is glycosylated (O-linked (Gal...) hydroxylysine). 3 positions are modified to 4-hydroxyproline: Pro-73, Pro-79, and Pro-85. The span at 79-94 (PGRMGYPGPSGPMGPA) shows a compositional bias: low complexity. At Lys-100 the chain carries 5-hydroxylysine. O-linked (Gal...) hydroxylysine glycosylation occurs at Lys-100. In terms of domain architecture, C1q spans 110 to 244 (KDQPRPAFSA…FSGFLIFPSA (135 aa)). A glycan (N-linked (GlcNAc...) asparagine) is linked at Asn-146. Cys-172 and Cys-189 form a disulfide bridge. Gln-198 lines the Ca(2+) pocket.

In terms of assembly, core component of the complement C1 complex, a calcium-dependent complex composed of 1 molecule of the C1Q subcomplex, 2 molecules of C1R and 2 molecules of C1S. The C1Q subcomplex is composed 18 subunits: 3 chains of C1QA, C1QB, and C1QC trimerize to form 6 collagen-like triple helices connected to six globular ligand-recognition modules (C1q domain). Interacts with CR1 (via Sushi 24 and Sushi 25 domains). Interacts (via C-terminus) with CD33; this interaction activates CD33 inhibitory motifs. O-linked glycans are assumed to be the Glc-Gal disaccharides typically found as secondary modifications of hydroxylated lysines in collagen-like domains.

The protein resides in the secreted. The protein localises to the cell surface. Its activity is regulated as follows. The C1Q subcomplex is inhibited by sulfated molecules, such as triterpenoid sulfates, heparan sulfate, or chondroitin sulfates. In terms of biological role, core component of the complement C1 complex, a multiprotein complex that initiates the classical pathway of the complement system, a cascade of proteins that leads to phagocytosis and breakdown of pathogens and signaling that strengthens the adaptive immune system. The classical complement pathway is initiated by the C1Q subcomplex of the C1 complex, which specifically binds IgG or IgM immunoglobulins complexed with antigens, forming antigen-antibody complexes on the surface of pathogens: C1QA, together with C1QB and C1QC, specifically recognizes and binds the Fc regions of IgG or IgM via its C1q domain. Immunoglobulin-binding activates the proenzyme C1R, which cleaves C1S, initiating the proteolytic cascade of the complement system. The C1Q subcomplex is activated by a hexamer of IgG complexed with antigens, while it is activated by a pentameric IgM. The C1Q subcomplex also recognizes and binds phosphatidylserine exposed on the surface of cells undergoing programmed cell death, possibly promoting activation of the complement system. This is Complement C1q subcomponent subunit A (C1QA) from Bos taurus (Bovine).